The primary structure comprises 117 residues: Large ribosomal subunit protein bL20 (117 aa).

It belongs to the bacterial ribosomal protein bL20 family.

In terms of biological role, binds directly to 23S ribosomal RNA and is necessary for the in vitro assembly process of the 50S ribosomal subunit. It is not involved in the protein synthesizing functions of that subunit. In Geotalea daltonii (strain DSM 22248 / JCM 15807 / FRC-32) (Geobacter daltonii), this protein is Large ribosomal subunit protein bL20.